Consider the following 310-residue polypeptide: tRNA dimethylallyltransferase (310 aa).

13–20 (GPTASGKT) serves as a coordination point for ATP. 15-20 (TASGKT) lines the substrate pocket. Interaction with substrate tRNA stretches follow at residues 38-41 (DSAL), 162-166 (QRLSR), 243-248 (RCVGYR), and 276-283 (KRQITWLR).

Belongs to the IPP transferase family. Monomer. Mg(2+) is required as a cofactor.

The catalysed reaction is adenosine(37) in tRNA + dimethylallyl diphosphate = N(6)-dimethylallyladenosine(37) in tRNA + diphosphate. Functionally, catalyzes the transfer of a dimethylallyl group onto the adenine at position 37 in tRNAs that read codons beginning with uridine, leading to the formation of N6-(dimethylallyl)adenosine (i(6)A). The polypeptide is tRNA dimethylallyltransferase (Aliivibrio fischeri (strain ATCC 700601 / ES114) (Vibrio fischeri)).